Reading from the N-terminus, the 469-residue chain is Glutamate--tRNA ligase (469 aa).

The short motif at 10-20 (PSPTGYLHVGG) is the 'HIGH' region element. Residues Cys-99, Cys-101, Cys-126, and Asp-128 each contribute to the Zn(2+) site. The short motif at 238–242 (RLSKR) is the 'KMSKS' region element. ATP is bound at residue Lys-241.

This sequence belongs to the class-I aminoacyl-tRNA synthetase family. Glutamate--tRNA ligase type 1 subfamily. In terms of assembly, monomer. Zn(2+) is required as a cofactor.

It is found in the cytoplasm. It carries out the reaction tRNA(Glu) + L-glutamate + ATP = L-glutamyl-tRNA(Glu) + AMP + diphosphate. Functionally, catalyzes the attachment of glutamate to tRNA(Glu) in a two-step reaction: glutamate is first activated by ATP to form Glu-AMP and then transferred to the acceptor end of tRNA(Glu). This Pelobacter propionicus (strain DSM 2379 / NBRC 103807 / OttBd1) protein is Glutamate--tRNA ligase.